A 345-amino-acid chain; its full sequence is MKLGELAAHLGCPVEGNPDVEIRGLASIQQAGPGELSFIESEKYARFIKLTRAEALILDWRTPVSKVPCIRSEQPRLTFAHALELFYQPRRPAPGIHPTAILGANVQLGENVHLGAYVVIGDDVTIGPEAVIYPNCTIYNDVRIGVRTVVHANCVLHERTKIGDECIVQSGAVVGGEGFGFVPTPEGTWHKMPQSGYVRVEDQVEIGSNAAIDRPSVGFTHIGRGTKIDNLVMVGHGCEIGEHCLLVGQVGLAGGVKLGRNVVLAGQVGVAGHAAIGDRTVVSAQSGIPSDVEPGTVVSGSPALPHALWLRTSALIRRLPELFQNLRDLQRKVALLQQRLDSGHH.

The active-site Proton acceptor is the histidine 236.

It belongs to the transferase hexapeptide repeat family. LpxD subfamily. As to quaternary structure, homotrimer.

It catalyses the reaction a UDP-3-O-[(3R)-3-hydroxyacyl]-alpha-D-glucosamine + a (3R)-hydroxyacyl-[ACP] = a UDP-2-N,3-O-bis[(3R)-3-hydroxyacyl]-alpha-D-glucosamine + holo-[ACP] + H(+). It participates in bacterial outer membrane biogenesis; LPS lipid A biosynthesis. Catalyzes the N-acylation of UDP-3-O-acylglucosamine using 3-hydroxyacyl-ACP as the acyl donor. Is involved in the biosynthesis of lipid A, a phosphorylated glycolipid that anchors the lipopolysaccharide to the outer membrane of the cell. The protein is UDP-3-O-acylglucosamine N-acyltransferase 3 of Gloeobacter violaceus (strain ATCC 29082 / PCC 7421).